Consider the following 564-residue polypeptide: Dihydroxy-acid dehydratase (564 aa).

Mg(2+) is bound at residue Asp80. Cys121 serves as a coordination point for [2Fe-2S] cluster. Mg(2+)-binding residues include Asp122 and Lys123. An N6-carboxylysine modification is found at Lys123. Cys194 lines the [2Fe-2S] cluster pocket. Glu447 provides a ligand contact to Mg(2+). The active-site Proton acceptor is the Ser473.

Belongs to the IlvD/Edd family. In terms of assembly, homodimer. It depends on [2Fe-2S] cluster as a cofactor. The cofactor is Mg(2+).

The catalysed reaction is (2R)-2,3-dihydroxy-3-methylbutanoate = 3-methyl-2-oxobutanoate + H2O. It catalyses the reaction (2R,3R)-2,3-dihydroxy-3-methylpentanoate = (S)-3-methyl-2-oxopentanoate + H2O. The protein operates within amino-acid biosynthesis; L-isoleucine biosynthesis; L-isoleucine from 2-oxobutanoate: step 3/4. It functions in the pathway amino-acid biosynthesis; L-valine biosynthesis; L-valine from pyruvate: step 3/4. Functions in the biosynthesis of branched-chain amino acids. Catalyzes the dehydration of (2R,3R)-2,3-dihydroxy-3-methylpentanoate (2,3-dihydroxy-3-methylvalerate) into 2-oxo-3-methylpentanoate (2-oxo-3-methylvalerate) and of (2R)-2,3-dihydroxy-3-methylbutanoate (2,3-dihydroxyisovalerate) into 2-oxo-3-methylbutanoate (2-oxoisovalerate), the penultimate precursor to L-isoleucine and L-valine, respectively. This is Dihydroxy-acid dehydratase from Listeria monocytogenes serotype 4b (strain CLIP80459).